A 607-amino-acid chain; its full sequence is Arginine--tRNA ligase, cytoplasmic (607 aa).

Ala-2 is subject to N-acetylalanine. Ser-15 carries the post-translational modification Phosphoserine. Interaction with tRNA regions lie at residues 59-60 and 106-111; these read EW and NGPFIQ. Residues 148–153, His-162, Tyr-347, Asp-351, and Gln-375 each bind L-arginine; that span reads EFSSPN. Positions 151-162 match the 'HIGH' region motif; it reads SPNIAKPFHAGH. Positions 484–498 are interaction with tRNA; that stretch reads DTGPYLQYAHSRLRS.

Belongs to the class-I aminoacyl-tRNA synthetase family. As to quaternary structure, monomer.

Its subcellular location is the cytoplasm. The protein resides in the cytosol. The enzyme catalyses tRNA(Arg) + L-arginine + ATP = L-arginyl-tRNA(Arg) + AMP + diphosphate. Functionally, forms part of a macromolecular complex that catalyzes the attachment of specific amino acids to cognate tRNAs during protein synthesis. This chain is Arginine--tRNA ligase, cytoplasmic, found in Saccharomyces cerevisiae (strain ATCC 204508 / S288c) (Baker's yeast).